Reading from the N-terminus, the 238-residue chain is 1-(5-phosphoribosyl)-5-[(5-phosphoribosylamino)methylideneamino] imidazole-4-carboxamide isomerase (238 aa).

D8 acts as the Proton acceptor in catalysis. D130 serves as the catalytic Proton donor.

This sequence belongs to the HisA/HisF family.

It is found in the cytoplasm. It carries out the reaction 1-(5-phospho-beta-D-ribosyl)-5-[(5-phospho-beta-D-ribosylamino)methylideneamino]imidazole-4-carboxamide = 5-[(5-phospho-1-deoxy-D-ribulos-1-ylimino)methylamino]-1-(5-phospho-beta-D-ribosyl)imidazole-4-carboxamide. It functions in the pathway amino-acid biosynthesis; L-histidine biosynthesis; L-histidine from 5-phospho-alpha-D-ribose 1-diphosphate: step 4/9. This chain is 1-(5-phosphoribosyl)-5-[(5-phosphoribosylamino)methylideneamino] imidazole-4-carboxamide isomerase, found in Methanococcus maripaludis (strain C5 / ATCC BAA-1333).